The chain runs to 310 residues: MNPKRSFQALILTLHNYWADKGCAVLQPYDMEVGAGTFHPATTLRALGPKPWKAAYVQPSRRPSDGRYGENPNRLQHYYQYQVILKPNPSNLQELYLGSLKAIGLDPLLHDVRFVEDDWESPTLGAWGLGWECWCDGMEVSQFTYFQQVCGIECSPVAGELTYGLERLAMYVQGVDNVYDLNFNGREGEEKISYGDVFLQAEQEYSRHNFEFADTSMLHRHFIDAEKECLALLAAGAPGDNDNQRLHKCVFPAYDQCIKASHIFNLLNARGVISVTERERYIARVRDLAKACGEAFLLTDAGGLNWNRAA.

The protein belongs to the class-II aminoacyl-tRNA synthetase family. In terms of assembly, tetramer of two alpha and two beta subunits.

Its subcellular location is the cytoplasm. The catalysed reaction is tRNA(Gly) + glycine + ATP = glycyl-tRNA(Gly) + AMP + diphosphate. This chain is Glycine--tRNA ligase alpha subunit, found in Agrobacterium fabrum (strain C58 / ATCC 33970) (Agrobacterium tumefaciens (strain C58)).